A 328-amino-acid polypeptide reads, in one-letter code: Ribosomal RNA small subunit methyltransferase H (328 aa).

S-adenosyl-L-methionine contacts are provided by residues 64–66, Asp83, Phe112, Asp129, and Gln136; that span reads GGH.

This sequence belongs to the methyltransferase superfamily. RsmH family.

Its subcellular location is the cytoplasm. It carries out the reaction cytidine(1402) in 16S rRNA + S-adenosyl-L-methionine = N(4)-methylcytidine(1402) in 16S rRNA + S-adenosyl-L-homocysteine + H(+). Specifically methylates the N4 position of cytidine in position 1402 (C1402) of 16S rRNA. The sequence is that of Ribosomal RNA small subunit methyltransferase H from Bdellovibrio bacteriovorus (strain ATCC 15356 / DSM 50701 / NCIMB 9529 / HD100).